Reading from the N-terminus, the 1301-residue chain is MTMGDMKTPDFDDLLAAFDIPDMVDPKAAIESGHDDHESHMKQNAHGEDDSHAPSSSDVGVSVIVKNVRNIDSSEGGEKDGHNPTGNGLHNGFLTASSLDSYSKDGAKSLKGDVPASEVTLKDSTFSQFSPISSAEEFDDDEKIEVDDPPDKEDMRSSFRSNVLTGSAPQQDYDKLKALGGENSSKTGLSTSGNVEKNKAVKRETEASSINLSVYEPFKVRKAEDKLKESSDKVLENRVLDGKLSSEKNDTSLPSVAPSKTKSSSKLSSCIAAIAALSAKKAASDSCKEPVANSRESSPLPKEVNDSPRAADKSPESQNLIDGTKKPSLKQPDSPRSISSENSSKGSPSSPAGSTPAIPKVRIKTIKTSSGEIKRTVTRVLPEVDLDSGKKPSEQTASVMASVTSLLSSPASAAVLSSPPRAPLQSAVVTNAVSPAELTPKQVTIKPVATAFLPVSAVKTAGSQVINLKLANNTTVKATVISAASVQSASSAIIKAANAIQQQTVVVPASSLANAKLVPKTVHLANLNLLPQGAQATSELRQVLTKPQQQIKQAIINAAASQPPKKVSRVQVVSSLQSSVVEAFNKVLSSVNPVPVYIPNLSPPANAGITLPTRGYKCLECGDSFALEKSLTQHYDRRSVRIEVTCNHCTKNLVFYNKCSLLSHARGHKEKGVVMQCSHLILKPVPADQMIVSPSSNTSTSTSTLQSPVGAGTHTVTKIQSGITGTVISAPSSTPITPAMPLDEDPSKLCRHSLKCLECNEVFQDETSLATHFQQAADTSGQKTCTICQMLLPNQCSYASHQRIHQHKSPYTCPECGAICRSVHFQTHVTKNCLHYTRRVGFRCVHCNVVYSDVAALKSHIQGSHCEVFYKCPICPMAFKSAPSTHSHAYTQHPGIKIGEPKIIYKCSMCDTVFTLQTLLYRHFDQHIENQKVSVFKCPDCSLLYAQKQLMMDHIKSMHGTLKSIEGPPNLGINLPLSIKPATQNSANQNKEDTKSMNGKEKLEKKSPSPVKKSMETKKVASPGWTCWECDCLFMQRDVYISHVRKEHGKQMKKHPCRQCDKSFSSSHSLCRHNRIKHKGIRKVYACSHCPDSRRTFTKRLMLEKHVQLMHGIKDPDLKEMTDATNEEETEIKEDTKVPSPKRKLEEPVLEFRPPRGAITQPLKKLKINVFKVHKCAVCGFTTENLLQFHEHIPQHKSDGSSYQCRECGLCYTSHVSLSRHLFIVHKLKEPQPVSKQNGAGEDNQQENKPSHEDESPDGAVSDRKCKVCAKTFETEAALNTHMRTHGMAFIKSKRMSSAEK.

3 disordered regions span residues 26-206 (PKAA…RETE), 223-266 (AEDK…SSSK), and 281-366 (KAAS…IKTI). The span at 32 to 52 (SGHDDHESHMKQNAHGEDDSH) shows a compositional bias: basic and acidic residues. Over residues 84–101 (PTGNGLHNGFLTASSLDS) the composition is skewed to polar residues. The span at 102 to 111 (YSKDGAKSLK) shows a compositional bias: basic and acidic residues. Over residues 122–133 (KDSTFSQFSPIS) the composition is skewed to polar residues. A phosphoserine mark is found at Ser-130, Ser-133, and Ser-134. The segment covering 136–151 (EEFDDDEKIEVDDPPD) has biased composition (acidic residues). Over residues 158-170 (SFRSNVLTGSAPQ) the composition is skewed to polar residues. Lys-175 carries the N6-acetyllysine modification. A compositionally biased stretch (polar residues) spans 182-195 (ENSSKTGLSTSGNV). Composition is skewed to basic and acidic residues over residues 196–206 (EKNKAVKRETE) and 223–250 (AEDK…EKND). Phosphothreonine is present on Thr-205. Phosphoserine occurs at positions 252, 307, and 314. Basic and acidic residues predominate over residues 303-315 (EVNDSPRAADKSP). Over residues 337 to 359 (SISSENSSKGSPSSPAGSTPAIP) the composition is skewed to low complexity. Ser-434 carries the post-translational modification Phosphoserine. Residues Lys-459 and Lys-516 each participate in a glycyl lysine isopeptide (Lys-Gly) (interchain with G-Cter in SUMO2) cross-link. A C2H2-type 1; degenerate zinc finger spans residues 616 to 635 (YKCLECGDSFALEKSLTQHY). The segment at 754 to 779 (LKCLECNEVFQDETSLATHFQQAADT) adopts a C2H2-type 2; degenerate zinc-finger fold. 5 consecutive C2H2-type zinc fingers follow at residues 783–805 (KTCT…QRIH), 842–865 (FRCV…QGSH), 870–893 (YKCP…YTQH), 905–927 (YKCS…FDQH), and 936–959 (FKCP…KSMH). Lys-980 participates in a covalent cross-link: Glycyl lysine isopeptide (Lys-Gly) (interchain with G-Cter in SUMO2). The disordered stretch occupies residues 983–1017 (TQNSANQNKEDTKSMNGKEKLEKKSPSPVKKSMET). Over residues 990–1017 (NKEDTKSMNGKEKLEKKSPSPVKKSMET) the composition is skewed to basic and acidic residues. C2H2-type zinc fingers lie at residues 1025-1048 (WTCW…RKEH) and 1055-1078 (HPCR…RIKH). The C2H2-type 10; degenerate zinc-finger motif lies at 1085–1111 (YACSHCPDSRRTFTKRLMLEKHVQLMH). The residue at position 1140 (Ser-1140) is a Phosphoserine. Glycyl lysine isopeptide (Lys-Gly) (interchain with G-Cter in SUMO2) cross-links involve residues Lys-1144 and Lys-1167. The segment at 1203–1226 (YQCRECGLCYTSHVSLSRHLFIVH) adopts a C2H2-type 11 zinc-finger fold. The tract at residues 1230 to 1263 (EPQPVSKQNGAGEDNQQENKPSHEDESPDGAVSD) is disordered. Residues 1264–1286 (RKCKVCAKTFETEAALNTHMRTH) form a C2H2-type 12 zinc finger.

This sequence belongs to the krueppel C2H2-type zinc-finger protein family.

It localises to the nucleus. Its function is as follows. May be involved in transcriptional regulation. In Homo sapiens (Human), this protein is Zinc finger protein 532 (ZNF532).